Reading from the N-terminus, the 217-residue chain is Small ribosomal subunit protein uS3 (217 aa).

The 71-residue stretch at 40–110 (IRDLINKGFN…EVYINIHEVR (71 aa)) folds into the KH type-2 domain.

This sequence belongs to the universal ribosomal protein uS3 family. As to quaternary structure, part of the 30S ribosomal subunit. Forms a tight complex with proteins S10 and S14.

In terms of biological role, binds the lower part of the 30S subunit head. Binds mRNA in the 70S ribosome, positioning it for translation. The polypeptide is Small ribosomal subunit protein uS3 (Rickettsia felis (strain ATCC VR-1525 / URRWXCal2) (Rickettsia azadi)).